The chain runs to 78 residues: MARVCQVTGKKPMVGNNVSHANNKTKRRFLPNLQNRKFWVESENRWVSLRITNAALRTIDKNGIDAVLADLRASGEKI.

Belongs to the bacterial ribosomal protein bL28 family.

This Methylobacillus flagellatus (strain ATCC 51484 / DSM 6875 / VKM B-1610 / KT) protein is Large ribosomal subunit protein bL28.